A 427-amino-acid polypeptide reads, in one-letter code: Glutamate-1-semialdehyde 2,1-aminomutase (427 aa).

Residue Lys-265 is modified to N6-(pyridoxal phosphate)lysine.

This sequence belongs to the class-III pyridoxal-phosphate-dependent aminotransferase family. HemL subfamily. As to quaternary structure, homodimer. The cofactor is pyridoxal 5'-phosphate.

It is found in the cytoplasm. It catalyses the reaction (S)-4-amino-5-oxopentanoate = 5-aminolevulinate. Its pathway is porphyrin-containing compound metabolism; protoporphyrin-IX biosynthesis; 5-aminolevulinate from L-glutamyl-tRNA(Glu): step 2/2. The chain is Glutamate-1-semialdehyde 2,1-aminomutase from Marinomonas sp. (strain MWYL1).